The sequence spans 478 residues: Odorant receptor coreceptor (478 aa).

Residues 1-41 (MQVQPTKYVGLVADLMPNIRLMQASGHFLFRYVTGPILIRK) lie on the Cytoplasmic side of the membrane. A helical transmembrane segment spans residues 42–62 (VYSWWTLAMVLIQFFAILGNL). Residues 63–73 (ATNADDVNELT) lie on the Extracellular side of the membrane. The chain crosses the membrane as a helical span at residues 74–94 (ANTITTLFFTHSVTKFIYFAV). Topologically, residues 95-133 (NSENFYRTLAIWNQTNTHPLFAESDARYHSIALAKMRKL) are cytoplasmic. The helical transmembrane segment at 134–154 (LVLVMATTVLSVVAWVTITFF) threads the bilayer. At 155 to 188 (GESVKTVLDKATNETYTVDIPRLPIKSWYPWNAM) the chain is on the extracellular side. Asn-167 carries N-linked (GlcNAc...) asparagine glycosylation. A helical membrane pass occupies residues 189 to 209 (SGPAYIFSFIYQIYFLLFSMV). Topologically, residues 210-338 (QSNLADVMFC…AIKYWVERHK (129 aa)) are cytoplasmic. The helical transmembrane segment at 339–361 (HVVRLVSAIGDTYGPALLLHMLT) threads the bilayer. The Extracellular segment spans residues 362 to 382 (STIKLTLLAYQATKIDGVNVY). The chain crosses the membrane as a helical span at residues 383–403 (GLTVIGYLCYALAQVFLFCIF). Residues 404–454 (GNRLIEESSSVMEAAYSCHWYDGSEEAKTFVQIVCQQCQKAMTISGAKFFT) are Cytoplasmic-facing. A helical membrane pass occupies residues 455 to 475 (VSLDLFASVLGAVVTYFMVLV). At 476 to 478 (QLK) the chain is on the extracellular side.

It belongs to the insect chemoreceptor superfamily. Heteromeric odorant receptor channel (TC 1.A.69) family. Orco subfamily. As to quaternary structure, heterodimer with conventional odorant receptors (ORs). Complexes exist early in the endomembrane system in olfactory sensory neurons (OSNs), coupling these complexes to the conserved ciliary trafficking pathway. As to expression, expressed in olfactory and gustatory organs of both adult and immature stages. Highest expression is seen in adult antennae and the maxillary palps. Lower expression also seen in proboscis and legs. Within the antenna, expression originates in cell bodies and projects into the lumen of an individual sensillum, presumably along the dendritic extension of the neuron. Within the maxillary palps, expression is seen in a small number of cell bodies and in projections into the sensillar cone. Within the probiscus, expression is seen in a single type of sensillum on the outer surface of the labellar lobes.

The protein localises to the cell membrane. Functionally, odorant coreceptor which complexes with conventional odorant receptors (ORs) to form odorant-sensing units, providing sensitive and prolonged odorant signaling and calcium permeability. Orco is a universal and integral part of the functional odorant receptor, involved in the dendritic localization of other olfactory receptors. Can form functional ion channels in the absence of an odor-binding OR. Plays a key role in preferred attraction of females for humans over non-human hosts for blood feeding. Human attraction plays a crucial role in the transmission of Plasmodium protozoans by the mosquito leading to infection diseases like malaria. Also required for the response to N,N-Diethyl-meta-toluamide (DEET), the most widely used insect repellent worldwide. The polypeptide is Odorant receptor coreceptor (Orco) (Anopheles gambiae (African malaria mosquito)).